A 300-amino-acid chain; its full sequence is Inositol polyphosphate multikinase beta (300 aa).

Ser-78 is modified (phosphoserine).

This sequence belongs to the inositol phosphokinase (IPK) family. In terms of assembly, interacts with KIN10 and KIN11. Post-translationally, phosphorylated by KIN10. Expressed in leaves, stems, roots, siliques and flowers. Detected in vascular strands, stigma cells, the abscission zones of fully elongated siliques, the root central cylinder and the root tip.

It is found in the nucleus. The catalysed reaction is 1D-myo-inositol 1,4,5-trisphosphate + 2 ATP = 1D-myo-inositol 1,3,4,5,6-pentakisphosphate + 2 ADP + 2 H(+). It catalyses the reaction 1D-myo-inositol 1,3,4,6-tetrakisphosphate + ATP = 1D-myo-inositol 1,3,4,5,6-pentakisphosphate + ADP + H(+). With respect to regulation, down-regulated by KIN10 through its protein phosphorylation. Functionally, inositol phosphate kinase with a broad substrate specificity. Phosphorylates inositol 1,4,5-trisphosphate (Ins(1,4,5)P3), inositol 1,4,5,6-tetrakisphosphate (Ins(1,4,5,6)P4), inositol 1,3,4,5-tetrakisphosphate (Ins(1,3,4,5)P4), inositol 1,3,4,6-tetrakisphosphate (Ins(1,3,4,6)P4) and inositol 1,2,3,4,6-pentakisphosphate (Ins(1,2,3,4,6)P5) but not inositol 1,4-bisphosphate (Ins(1,4)P2), inositol 1,3,4-trisphosphate (Ins(1,3,4)P3), inositol 1,2,6-trisphosphate (Ins(1,2,6)P3), inositol 3,4,5,6-tetrakisphosphate (Ins(3,4,5,6)P4), inositol 1,3,4,5,6-pentakisphosphate (Ins(1,3,4,5,6)P5), inositol 1,2,4,5,6-pentakisphosphate (Ins(1,2,4,5,6)P5) or inositol hexakisphosphate (InsP6). Involved in the auxin signaling pathway. Regulates axillary shoot branching and is required for phytate synthesis in seeds. This chain is Inositol polyphosphate multikinase beta (IPK2b), found in Arabidopsis thaliana (Mouse-ear cress).